The following is a 344-amino-acid chain: Heat-inducible transcription repressor HrcA (344 aa).

The protein belongs to the HrcA family.

In terms of biological role, negative regulator of class I heat shock genes (grpE-dnaK-dnaJ and groELS operons). Prevents heat-shock induction of these operons. This chain is Heat-inducible transcription repressor HrcA, found in Streptococcus pneumoniae (strain 70585).